The primary structure comprises 180 residues: Guanosine-3',5'-bis(diphosphate) 3'-pyrophosphohydrolase MESH1 (180 aa).

In terms of domain architecture, HD spans 33–128; it reads YINHPIGVAR…VKLADKLYNL (96 aa). Mn(2+) is bound by residues His-36, His-62, and Asp-63. Active-site nucleophile residues include Glu-66 and Asp-67. Residue Asp-123 participates in Mn(2+) binding.

The protein belongs to the MESH1 family. Requires Mn(2+) as cofactor.

The catalysed reaction is guanosine 3',5'-bis(diphosphate) + H2O = GDP + diphosphate + H(+). Functionally, ppGpp hydrolyzing enzyme involved in starvation response. In Danio rerio (Zebrafish), this protein is Guanosine-3',5'-bis(diphosphate) 3'-pyrophosphohydrolase MESH1 (hddc3).